A 365-amino-acid polypeptide reads, in one-letter code: Transcription factor TCP2 (365 aa).

Residues 42-100 (GKDRHSKVLTSKGPRDRRVRLSVSTALQFYDLQDRLGYDQPSKAVEWLIKAAEDSISEL) enclose the TCP domain. A compositionally biased stretch (low complexity) spans 130–150 (KSACSSNSDTSKNSSGLSLSR). Disordered regions lie at residues 130–202 (KSAC…SAPS) and 220–245 (QTHF…HPHH). Positions 151-172 (SELRDKARERARERTAKETKER) constitute a R domain. Positions 151–176 (SELRDKARERARERTAKETKERDHNH) are enriched in basic and acidic residues. The span at 177-202 (TSFTDLLNSGSDPVNSNRQWMASAPS) shows a compositional bias: polar residues.

Interacts with SPL. Interacts with CRY1. As to expression, expressed in cotyledons, particularly in the vascular region, in leaves, roots, buds, flowers and immature siliques.

It localises to the nucleus. Its function is as follows. Plays a pivotal role in the control of morphogenesis of shoot organs by negatively regulating the expression of boundary-specific genes such as CUC genes, probably through the induction of miRNA (e.g. miR164). Participates in ovule development. Promotes light-regulated transcription of CHS, CAB, HYH and HY5. Positively regulates photomorphogenesis (e.g. hypocotyl elongation inhibition and cotyledon opening in response to blue light). This is Transcription factor TCP2 from Arabidopsis thaliana (Mouse-ear cress).